The chain runs to 433 residues: ATP-dependent protease ATPase subunit HslU (433 aa).

Residues valine 18, 60–65 (GVGKTE), aspartate 246, glutamate 311, and arginine 383 each bind ATP.

Belongs to the ClpX chaperone family. HslU subfamily. As to quaternary structure, a double ring-shaped homohexamer of HslV is capped on each side by a ring-shaped HslU homohexamer. The assembly of the HslU/HslV complex is dependent on binding of ATP.

The protein localises to the cytoplasm. Its function is as follows. ATPase subunit of a proteasome-like degradation complex; this subunit has chaperone activity. The binding of ATP and its subsequent hydrolysis by HslU are essential for unfolding of protein substrates subsequently hydrolyzed by HslV. HslU recognizes the N-terminal part of its protein substrates and unfolds these before they are guided to HslV for hydrolysis. The polypeptide is ATP-dependent protease ATPase subunit HslU (Rhodopseudomonas palustris (strain HaA2)).